A 96-amino-acid chain; its full sequence is Neutrophil defensin 3 (96 aa).

An N-terminal signal peptide occupies residues 1-19 (MRTLVILAAILLVALQAQA). Positions 20–66 (EPLQARTDEATAAQEQIPTDNPEVVVSLAWDESLAPKDSVPGLRKNM) are excised as a propeptide. 3 cysteine pairs are disulfide-bonded: cysteine 68/cysteine 96, cysteine 70/cysteine 85, and cysteine 75/cysteine 95.

It is found in the secreted. In terms of biological role, has bacteriostatic activity against Gram-positive bacteria S.aureus and L.monocytogenes and Gram-negative bacterium E.coli and antifungal activity against C.neoformans. In Macaca mulatta (Rhesus macaque), this protein is Neutrophil defensin 3.